Reading from the N-terminus, the 1755-residue chain is Transposon Ty1-GR1 Gag-Pol polyprotein (1755 aa).

Residues 1–16 (MESQQLSQHSHISHGS) are compositionally biased toward low complexity. Disordered regions lie at residues 1 to 93 (MESQ…MMTQ), 126 to 173 (PQSQ…RPPP), and 352 to 421 (GSRN…SKST). 3 stretches are compositionally biased toward polar residues: residues 48–60 (TKANSQQTTTPAS), 71–93 (SPQTAQSHSPQNGPYPQQCMMTQ), and 127–152 (QSQFPQYPSSVGTPLSTPSPESGNTF). Residues 153–165 (TDSSSADSDMTST) show a composition bias toward low complexity. Positions 299-401 (NNGIHINNKV…NSKSKTARAH (103 aa)) are RNA-binding. Low complexity predominate over residues 402-418 (NVSTSNNSPSTDNDSIS). A Phosphoserine modification is found at Ser416. Asp461 acts as the For protease activity; shared with dimeric partner in catalysis. The interval 583–640 (NVHTSESTRKYPYPFIHRMLAHANAQTIRYSLKNNTITYFNESDVDWSSAIDYQCPDC) is integrase-type zinc finger-like. The 176-residue stretch at 660–835 (NSYEPFQYLH…AGLDISTLLP (176 aa)) folds into the Integrase catalytic domain. Residues Asp671 and Asp736 each coordinate Mg(2+). Disordered regions lie at residues 956 to 1087 (SKAV…ETEK), 1092 to 1111 (RSPSIDASPPENNSSHNIVP), and 1130 to 1187 (DLPL…DNET). Residues 960-969 (SPTDSTPPST) show a composition bias toward low complexity. The segment covering 1005 to 1015 (STPQISNIEST) has biased composition (polar residues). Over residues 1038 to 1053 (ESSHASKSKDFRHSDS) the composition is skewed to basic and acidic residues. Composition is skewed to polar residues over residues 1054-1082 (YSENETNHTNVPISSTGGTNNKTVPQISD) and 1101-1111 (PENNSSHNIVP). The Bipartite nuclear localization signal signature appears at 1178–1212 (KKRSLEDNETEIKVSRDTWNTKNMRSLEPPRSKKR). In terms of domain architecture, Reverse transcriptase Ty1/copia-type spans 1338–1476 (NNYYITQLDI…DILGLEIKYQ (139 aa)). Positions 1346, 1427, 1428, 1610, 1652, and 1685 each coordinate Mg(2+). The 143-residue stretch at 1610–1752 (DASYGNQPYY…IKTFKLLTNK (143 aa)) folds into the RNase H Ty1/copia-type domain.

As to quaternary structure, the capsid protein forms a homotrimer, from which the VLPs are assembled. The protease is a homodimer, whose active site consists of two apposed aspartic acid residues. In terms of processing, initially, virus-like particles (VLPs) are composed of the structural unprocessed proteins Gag and Gag-Pol, and also contain the host initiator methionine tRNA (tRNA(i)-Met) which serves as a primer for minus-strand DNA synthesis, and a dimer of genomic Ty RNA. Processing of the polyproteins occurs within the particle and proceeds by an ordered pathway, called maturation. First, the protease (PR) is released by autocatalytic cleavage of the Gag-Pol polyprotein yielding capsid protein p45 and a Pol-p154 precursor protein. This cleavage is a prerequisite for subsequent processing of Pol-p154 at the remaining sites to release the mature structural and catalytic proteins. Maturation takes place prior to the RT reaction and is required to produce transposition-competent VLPs.

It localises to the cytoplasm. The protein localises to the nucleus. The enzyme catalyses DNA(n) + a 2'-deoxyribonucleoside 5'-triphosphate = DNA(n+1) + diphosphate. It carries out the reaction Endonucleolytic cleavage to 5'-phosphomonoester.. Its function is as follows. Capsid protein (CA) is the structural component of the virus-like particle (VLP), forming the shell that encapsulates the retrotransposons dimeric RNA genome. The particles are assembled from trimer-clustered units and there are holes in the capsid shells that allow for the diffusion of macromolecules. CA also has nucleocapsid-like chaperone activity, promoting primer tRNA(i)-Met annealing to the multipartite primer-binding site (PBS), dimerization of Ty1 RNA and initiation of reverse transcription. Functionally, the aspartyl protease (PR) mediates the proteolytic cleavages of the Gag and Gag-Pol polyproteins after assembly of the VLP. In terms of biological role, reverse transcriptase/ribonuclease H (RT) is a multifunctional enzyme that catalyzes the conversion of the retro-elements RNA genome into dsDNA within the VLP. The enzyme displays a DNA polymerase activity that can copy either DNA or RNA templates, and a ribonuclease H (RNase H) activity that cleaves the RNA strand of RNA-DNA heteroduplexes during plus-strand synthesis and hydrolyzes RNA primers. The conversion leads to a linear dsDNA copy of the retrotransposon that includes long terminal repeats (LTRs) at both ends. Integrase (IN) targets the VLP to the nucleus, where a subparticle preintegration complex (PIC) containing at least integrase and the newly synthesized dsDNA copy of the retrotransposon must transit the nuclear membrane. Once in the nucleus, integrase performs the integration of the dsDNA into the host genome. The chain is Transposon Ty1-GR1 Gag-Pol polyprotein (TY1B-GR1) from Saccharomyces cerevisiae (strain ATCC 204508 / S288c) (Baker's yeast).